We begin with the raw amino-acid sequence, 206 residues long: Protein-methionine-sulfoxide reductase heme-binding subunit MsrQ (206 aa).

6 helical membrane-spanning segments follow: residues 7–27 (IIIH…LLSG), 43–63 (FLGF…KVFY), 77–97 (LGLW…ALEL), 112–132 (GYLI…LSSW), 142–162 (WWFY…IHYV), and 172–192 (SMLY…GLFI).

The protein belongs to the MsrQ family. Heterodimer of a catalytic subunit (MsrP) and a heme-binding subunit (MsrQ). FMN is required as a cofactor. It depends on heme b as a cofactor.

Its subcellular location is the cell inner membrane. In terms of biological role, part of the MsrPQ system that repairs oxidized periplasmic proteins containing methionine sulfoxide residues (Met-O), using respiratory chain electrons. Thus protects these proteins from oxidative-stress damage caused by reactive species of oxygen and chlorine generated by the host defense mechanisms. MsrPQ is essential for the maintenance of envelope integrity under bleach stress, rescuing a wide series of structurally unrelated periplasmic proteins from methionine oxidation. MsrQ provides electrons for reduction to the reductase catalytic subunit MsrP, using the quinone pool of the respiratory chain. The polypeptide is Protein-methionine-sulfoxide reductase heme-binding subunit MsrQ (Pasteurella multocida (strain Pm70)).